The chain runs to 518 residues: Chromosomal replication initiator protein DnaA (518 aa).

Positions 1–73 are domain I, interacts with DnaA modulators; the sequence is MTLAEFWPLC…REELAAGRPA (73 aa). Positions 73–180 are domain II; sequence AFVFKPGEGV…DAEEARYEQT (108 aa). The segment at 144 to 180 is disordered; sequence HEPRQAAGPASRPESAAVAKARTDAQRDAEEARYEQT. Positions 164 to 177 are enriched in basic and acidic residues; that stretch reads ARTDAQRDAEEARY. Positions 181–397 are domain III, AAA+ region; it reads NLSPDYTFDT…GAFNRVGASS (217 aa). Residues glycine 225, glycine 227, lysine 228, and threonine 229 each contribute to the ATP site. The segment at 398-518 is domain IV, binds dsDNA; it reads RFMNRPVIDI…YEKLLILIQN (121 aa).

The protein belongs to the DnaA family. As to quaternary structure, oligomerizes as a right-handed, spiral filament on DNA at oriC.

Its subcellular location is the cytoplasm. In terms of biological role, plays an essential role in the initiation and regulation of chromosomal replication. ATP-DnaA binds to the origin of replication (oriC) to initiate formation of the DNA replication initiation complex once per cell cycle. Binds the DnaA box (a 9 base pair repeat at the origin) and separates the double-stranded (ds)DNA. Forms a right-handed helical filament on oriC DNA; dsDNA binds to the exterior of the filament while single-stranded (ss)DNA is stabiized in the filament's interior. The ATP-DnaA-oriC complex binds and stabilizes one strand of the AT-rich DNA unwinding element (DUE), permitting loading of DNA polymerase. After initiation quickly degrades to an ADP-DnaA complex that is not apt for DNA replication. Binds acidic phospholipids. This Neisseria gonorrhoeae (strain ATCC 700825 / FA 1090) protein is Chromosomal replication initiator protein DnaA.